The sequence spans 705 residues: Prolyl endopeptidase (705 aa).

An N-terminal signal peptide occupies residues 1–20 (MKYNKLSVAVAAFAFAAVSA). Active-site charge relay system residues include Ser-556 and His-675.

Belongs to the peptidase S9A family. Monomer.

It is found in the periplasm. It catalyses the reaction Hydrolysis of Pro-|-Xaa &gt;&gt; Ala-|-Xaa in oligopeptides.. In terms of biological role, cleaves peptide bonds on the C-terminal side of prolyl residues within peptides that are up to approximately 30 amino acids long. Has an absolute requirement for an X-Pro bond in the trans configuration immediately preceding the Pro-Y scissible bond. The polypeptide is Prolyl endopeptidase (f1pep1) (Elizabethkingia meningoseptica (Chryseobacterium meningosepticum)).